The primary structure comprises 729 residues: DNA topoisomerase 3 (729 aa).

Positions 3-136 constitute a Toprim domain; the sequence is KSVVIAEKPS…IKRLWISSVT (134 aa). Mg(2+) contacts are provided by glutamate 9 and aspartate 105. The 442-residue stretch at 153-594 folds into the Topo IA-type catalytic domain; it reads YDNLYASAVA…EMKNYTKEIV (442 aa). The interaction with DNA stretch occupies residues 187 to 192; the sequence is NCGRVQ. Tyrosine 310 functions as the O-(5'-phospho-DNA)-tyrosine intermediate in the catalytic mechanism. Positions 686 to 713 are enriched in basic and acidic residues; it reads ERRKKESGNKADKRDVQKYMKQQKKEEE. The disordered stretch occupies residues 686 to 718; that stretch reads ERRKKESGNKADKRDVQKYMKQQKKEEEPLNNP.

It belongs to the type IA topoisomerase family. The cofactor is Mg(2+).

It catalyses the reaction ATP-independent breakage of single-stranded DNA, followed by passage and rejoining.. Releases the supercoiling and torsional tension of DNA, which is introduced during the DNA replication and transcription, by transiently cleaving and rejoining one strand of the DNA duplex. Introduces a single-strand break via transesterification at a target site in duplex DNA. The scissile phosphodiester is attacked by the catalytic tyrosine of the enzyme, resulting in the formation of a DNA-(5'-phosphotyrosyl)-enzyme intermediate and the expulsion of a 3'-OH DNA strand. The free DNA strand then undergoes passage around the unbroken strand, thus removing DNA supercoils. Finally, in the religation step, the DNA 3'-OH attacks the covalent intermediate to expel the active-site tyrosine and restore the DNA phosphodiester backbone. This is DNA topoisomerase 3 from Bacillus thuringiensis subsp. konkukian (strain 97-27).